The following is a 533-amino-acid chain: Fimbrial subunit type 1 (533 aa).

Residues 1–30 form the signal peptide; that stretch reads MHSLNTRRGLGLAAAMTLAAGALVAPTGAA. Positions 496 to 500 match the LPXTG sorting signal motif; the sequence is LPLTG. T499 is modified (pentaglycyl murein peptidoglycan amidated threonine). Positions 500–533 are cleaved as a propeptide — removed by sortase; sequence GANGVIFLTIAGALLVAGGAVVAYANKRRHVAKH.

It is found in the secreted. The protein resides in the cell wall. Its subcellular location is the fimbrium. Functionally, major fimbrial subunit of A.viscosus. The sequence is that of Fimbrial subunit type 1 from Actinomyces viscosus.